The following is a 188-amino-acid chain: Ribose 1,5-bisphosphate phosphokinase PhnN (188 aa).

This sequence belongs to the ribose 1,5-bisphosphokinase family.

The catalysed reaction is alpha-D-ribose 1,5-bisphosphate + ATP = 5-phospho-alpha-D-ribose 1-diphosphate + ADP. The protein operates within metabolic intermediate biosynthesis; 5-phospho-alpha-D-ribose 1-diphosphate biosynthesis; 5-phospho-alpha-D-ribose 1-diphosphate from D-ribose 5-phosphate (route II): step 3/3. Its function is as follows. Catalyzes the phosphorylation of ribose 1,5-bisphosphate to 5-phospho-D-ribosyl alpha-1-diphosphate (PRPP). In Dickeya zeae (strain Ech586) (Dickeya dadantii (strain Ech586)), this protein is Ribose 1,5-bisphosphate phosphokinase PhnN.